Consider the following 138-residue polypeptide: Small ribosomal subunit protein uS11c (138 aa).

Residues 1-24 (MTKPIPRIGSRRNGRIGSRKSGRR) form a disordered region. Residues 9 to 24 (GSRRNGRIGSRKSGRR) are compositionally biased toward basic residues.

This sequence belongs to the universal ribosomal protein uS11 family. In terms of assembly, part of the 30S ribosomal subunit.

It is found in the plastid. The protein resides in the chloroplast. In Liriodendron tulipifera (Tuliptree), this protein is Small ribosomal subunit protein uS11c.